A 63-amino-acid chain; its full sequence is Large ribosomal subunit protein uL29 (63 aa).

Belongs to the universal ribosomal protein uL29 family.

In Bacillus cereus (strain ATCC 14579 / DSM 31 / CCUG 7414 / JCM 2152 / NBRC 15305 / NCIMB 9373 / NCTC 2599 / NRRL B-3711), this protein is Large ribosomal subunit protein uL29.